A 260-amino-acid polypeptide reads, in one-letter code: Indole-3-glycerol phosphate synthase (260 aa).

This sequence belongs to the TrpC family.

It carries out the reaction 1-(2-carboxyphenylamino)-1-deoxy-D-ribulose 5-phosphate + H(+) = (1S,2R)-1-C-(indol-3-yl)glycerol 3-phosphate + CO2 + H2O. Its pathway is amino-acid biosynthesis; L-tryptophan biosynthesis; L-tryptophan from chorismate: step 4/5. In Neisseria meningitidis serogroup C / serotype 2a (strain ATCC 700532 / DSM 15464 / FAM18), this protein is Indole-3-glycerol phosphate synthase.